The following is a 743-amino-acid chain: Inhibitor of nuclear factor kappa-B kinase subunit alpha (743 aa).

The Protein kinase domain maps to Trp15 to Met300. ATP is bound by residues Leu21–Val29 and Lys44. The active-site Proton acceptor is Asp144. Positions Leu453–Leu474 are leucine-zipper. The interval Met736–Leu741 is NEMO-binding.

The protein belongs to the protein kinase superfamily. Ser/Thr protein kinase family. I-kappa-B kinase subfamily.

It localises to the cytoplasm. The protein localises to the nucleus. The catalysed reaction is L-seryl-[I-kappa-B protein] + ATP = O-phospho-L-seryl-[I-kappa-B protein] + ADP + H(+). Its activity is regulated as follows. Activated when phosphorylated and inactivated when dephosphorylated. Its function is as follows. Phosphorylates inhibitors of NF-kappa-B thus leading to the dissociation of the inhibitor/NF-kappa-B complex and ultimately the degradation of the inhibitor. Phosphorylates 'Ser-10' of histone H3 at NF-kappa-B-regulated promoters during inflammatory responses triggered by cytokines. The sequence is that of Inhibitor of nuclear factor kappa-B kinase subunit alpha (chuk) from Xenopus laevis (African clawed frog).